The following is a 509-amino-acid chain: FAD-linked oxidoreductase dpmaF (509 aa).

Positions Met1–Ser21 are cleaved as a signal peptide. Residues Leu59–Ala231 form the FAD-binding PCMH-type domain. N-linked (GlcNAc...) asparagine glycans are attached at residues Asn125, Asn193, and Asn281.

It belongs to the oxygen-dependent FAD-linked oxidoreductase family. The cofactor is FAD.

It functions in the pathway secondary metabolite biosynthesis; terpenoid biosynthesis. FAD-linked oxidoreductase; part of the gene cluster that mediates the biosynthesis of the diterpenoid pyrones subglutinols A and B. The first step of the pathway is the synthesis of the alpha-pyrone moiety by the polyketide synthase dpmaA via condensation of one acetyl-CoA starter unit with 3 malonyl-CoA units and 2 methylations. The alpha-pyrone is then combined with geranylgeranyl pyrophosphate (GGPP) formed by the GGPP synthase dpmaD through the action of the prenyltransferase dpmaC to yield a linear alpha-pyrone diterpenoid. Subsequent steps in the diterpenoid pyrone biosynthetic pathway involve the decalin core formation, which is initiated by the epoxidation of the C10-C11 olefin by the FAD-dependent oxidoreductase dpmaE, and is followed by a cyclization cascade catalyzed by the terpene cyclase dpmaB. The dehydrogenase dpmaF is then involved in tetrahydrofuran (THF) ring formation at the C5 unit to complete the formation of subglutinols A and B. The polypeptide is FAD-linked oxidoreductase dpmaF (Metarhizium anisopliae (Entomophthora anisopliae)).